The chain runs to 32 residues: Cytochrome b6-f complex subunit 7 (32 aa).

A helical transmembrane segment spans residues 9–27 (AVLSSVLVLVGLAIGFLLL).

This sequence belongs to the PetM family. The 4 large subunits of the cytochrome b6-f complex are cytochrome b6, subunit IV (17 kDa polypeptide, PetD), cytochrome f and the Rieske protein, while the 4 small subunits are PetG, PetL, PetM and PetN. The complex functions as a dimer.

The protein resides in the plastid. The protein localises to the chloroplast thylakoid membrane. Functionally, component of the cytochrome b6-f complex, which mediates electron transfer between photosystem II (PSII) and photosystem I (PSI), cyclic electron flow around PSI, and state transitions. The protein is Cytochrome b6-f complex subunit 7 of Pyropia yezoensis (Susabi-nori).